The chain runs to 192 residues: Cytidylate kinase (192 aa).

7–15 lines the ATP pocket; that stretch reads GPAGSGKST.

Belongs to the cytidylate kinase family. Type 2 subfamily.

The protein resides in the cytoplasm. The catalysed reaction is CMP + ATP = CDP + ADP. The enzyme catalyses dCMP + ATP = dCDP + ADP. This is Cytidylate kinase from Haloarcula marismortui (strain ATCC 43049 / DSM 3752 / JCM 8966 / VKM B-1809) (Halobacterium marismortui).